The sequence spans 341 residues: Dihydroorotate dehydrogenase (quinone) (341 aa).

Residues 61–65 (AGLDK) and Thr85 each bind FMN. Residue Lys65 participates in substrate binding. 110–114 (NRMGF) contributes to the substrate binding site. Positions 138 and 171 each coordinate FMN. Asn171 lines the substrate pocket. Ser174 functions as the Nucleophile in the catalytic mechanism. Substrate is bound at residue Asn176. Residues Lys216 and Thr244 each coordinate FMN. A substrate-binding site is contributed by 245–246 (NT). Residues Gly267, Gly296, and 317 to 318 (YS) contribute to the FMN site.

This sequence belongs to the dihydroorotate dehydrogenase family. Type 2 subfamily. In terms of assembly, monomer. The cofactor is FMN.

The protein localises to the cell membrane. It catalyses the reaction (S)-dihydroorotate + a quinone = orotate + a quinol. It functions in the pathway pyrimidine metabolism; UMP biosynthesis via de novo pathway; orotate from (S)-dihydroorotate (quinone route): step 1/1. Its function is as follows. Catalyzes the conversion of dihydroorotate to orotate with quinone as electron acceptor. The protein is Dihydroorotate dehydrogenase (quinone) of Pseudomonas fluorescens (strain SBW25).